The primary structure comprises 357 residues: Serine proteinase inhibitor 1 (357 aa).

This sequence belongs to the serpin family. Poxviruses subfamily.

It localises to the host cytoplasm. Functionally, this viral protein may be involved in the regulation of the complement cascade. Involved in red pock formation. The chain is Serine proteinase inhibitor 1 (SPI-1) from Oryctolagus cuniculus (Rabbit).